Reading from the N-terminus, the 288-residue chain is 33 kDa chaperonin (288 aa).

2 disulfides stabilise this stretch: Cys233–Cys235 and Cys267–Cys270.

This sequence belongs to the HSP33 family. Post-translationally, under oxidizing conditions two disulfide bonds are formed involving the reactive cysteines. Under reducing conditions zinc is bound to the reactive cysteines and the protein is inactive.

It is found in the cytoplasm. Redox regulated molecular chaperone. Protects both thermally unfolding and oxidatively damaged proteins from irreversible aggregation. Plays an important role in the bacterial defense system toward oxidative stress. This chain is 33 kDa chaperonin, found in Actinobacillus succinogenes (strain ATCC 55618 / DSM 22257 / CCUG 43843 / 130Z).